Reading from the N-terminus, the 425-residue chain is MTKALTGVRILDFTHVQSGPTCTQLLAWFGADVIKVERPGVGDITRGQLQDIPNVDSLYFTMLNHNKRSITLDTKNPKGKEVLTELIKKCDVLVENFGPGVLDRMGFPWEKIQQINPKMIVASIKGFGPGPYEDCKVYENVAQCTGGAASTTGFRDGLPLVTGAQIGDSGTGLHLALGIVTALYQRTHSGKGQRVTAAMQDGVLNLARVKLRDQQRLAHGPLREYSQFGEGIPFGDAVPRAGNDSGGGQPGRILKCKGWETDPNAYIYFITQAPVWEKICDVIGEPTWKTDPNYAKPAARLPRLNEIFARIEQWTMTKTKFEAMEILNKDDIPCGPILSMKEIAEDQSLRATGTVVEVDHPTRGKYISVGNPIKLSDSPSDVQRSPLLGEHTDEILRSVLGFSDHQVADIHKSGALAPPQKQAAE.

CoA-binding positions include 17-18 (QS), Arg-38, 72-75 (LDTK), 96-98 (NFG), Arg-104, and 136-139 (KVYE). Residue Asp-168 is the Nucleophile of the active site. 247–249 (GGQ) is a binding site for substrate.

It belongs to the CoA-transferase III family. Frc subfamily. Homodimer.

The catalysed reaction is formyl-CoA + oxalate = oxalyl-CoA + formate. It participates in metabolic intermediate degradation; oxalate degradation; CO(2) and formate from oxalate: step 1/2. In terms of biological role, involved in the catabolism of oxalate and in the adapatation to low pH via the induction of the oxalate-dependent acid tolerance response (ATR). Catalyzes the transfer of the CoA moiety from formyl-CoA to oxalate. The polypeptide is Formyl-CoA:oxalate CoA-transferase (Bradyrhizobium diazoefficiens (strain JCM 10833 / BCRC 13528 / IAM 13628 / NBRC 14792 / USDA 110)).